A 310-amino-acid chain; its full sequence is Methionyl-tRNA formyltransferase (310 aa).

(6S)-5,6,7,8-tetrahydrofolate is bound at residue 109–112 (SLLP).

It belongs to the Fmt family.

The catalysed reaction is L-methionyl-tRNA(fMet) + (6R)-10-formyltetrahydrofolate = N-formyl-L-methionyl-tRNA(fMet) + (6S)-5,6,7,8-tetrahydrofolate + H(+). In terms of biological role, attaches a formyl group to the free amino group of methionyl-tRNA(fMet). The formyl group appears to play a dual role in the initiator identity of N-formylmethionyl-tRNA by promoting its recognition by IF2 and preventing the misappropriation of this tRNA by the elongation apparatus. This chain is Methionyl-tRNA formyltransferase, found in Chloroflexus aurantiacus (strain ATCC 29366 / DSM 635 / J-10-fl).